A 389-amino-acid polypeptide reads, in one-letter code: Nucleic acid dioxygenase ALKBH1 (389 aa).

The interval 86 to 389 (SKWQAYGLKG…VKRARINPDS (304 aa)) is tRNA-binding. Residues tryptophan 144 and 175–177 (YHY) contribute to the substrate site. In terms of domain architecture, Fe2OG dioxygenase spans 208 to 347 (GFEDFRAEAG…RVNMTVRQVL (140 aa)). 220-222 (NYY) lines the 2-oxoglutarate pocket. Residues histidine 231, aspartate 233, and histidine 287 each coordinate Fe cation. Substrate is bound at residue aspartate 233. 338 to 344 (RVNMTVR) is a 2-oxoglutarate binding site.

It belongs to the alkB family. Monomer. Interacts with DNAJB6. Fe(2+) is required as a cofactor. Ubiquitous.

It localises to the nucleus. The protein localises to the mitochondrion. It catalyses the reaction 2'-deoxyribonucleotide-(2'-deoxyribose 5'-phosphate)-2'-deoxyribonucleotide-DNA = a 3'-end 2'-deoxyribonucleotide-(2,3-dehydro-2,3-deoxyribose 5'-phosphate)-DNA + a 5'-end 5'-phospho-2'-deoxyribonucleoside-DNA + H(+). It carries out the reaction a methylated nucleobase within DNA + 2-oxoglutarate + O2 = a nucleobase within DNA + formaldehyde + succinate + CO2. The catalysed reaction is an N(6)-methyl-2'-deoxyadenosine in DNA + 2-oxoglutarate + O2 = a 2'-deoxyadenosine in DNA + formaldehyde + succinate + CO2. The enzyme catalyses an N(1)-methyladenosine in tRNA + 2-oxoglutarate + O2 = an adenosine in tRNA + formaldehyde + succinate + CO2. It catalyses the reaction 5-methylcytidine(34) in mitochondrial tRNA(Met) + 2 2-oxoglutarate + 2 O2 = 5-formylcytidine(34) in mitochondrial tRNA(Met) + 2 succinate + 2 CO2 + H2O. It carries out the reaction an N(3)-methylcytidine in mRNA + 2-oxoglutarate + O2 = a cytidine in mRNA + formaldehyde + succinate + CO2. The catalysed reaction is N(1)-methyladenosine(58) in tRNA + 2-oxoglutarate + O2 = adenosine(58) in tRNA + formaldehyde + succinate + CO2. In terms of biological role, dioxygenase that acts on nucleic acids, such as DNA and tRNA. Requires molecular oxygen, alpha-ketoglutarate and iron. A number of activities have been described for this dioxygenase, but recent results suggest that it mainly acts on tRNAs and mediates their demethylation or oxidation depending on the context and subcellular compartment. Mainly acts as a tRNA demethylase by removing N(1)-methyladenine from various tRNAs, with a preference for N(1)-methyladenine at position 58 (m1A58) present on a stem loop structure of tRNAs. Acts as a regulator of translation initiation and elongation in response to glucose deprivation: regulates both translation initiation, by mediating demethylation of tRNA(Met), and translation elongation, N(1)-methyladenine-containing tRNAs being preferentially recruited to polysomes to promote translation elongation. In mitochondrion, specifically interacts with mt-tRNA(Met) and mediates oxidation of mt-tRNA(Met) methylated at cytosine(34) to form 5-formylcytosine (f(5)c) at this position. mt-tRNA(Met) containing the f(5)c modification at the wobble position enables recognition of the AUA codon in addition to the AUG codon, expanding codon recognition in mitochondrial translation. Specifically demethylates DNA methylated on the 6th position of adenine (N(6)-methyladenosine) DNA. N(6)-methyladenosine (m6A) DNA is present at some L1 elements in embryonic stem cells and probably promotes their silencing. Demethylates mRNAs containing N(3)-methylcytidine modification. Also able to repair alkylated single-stranded DNA by oxidative demethylation, but with low activity. Also has DNA lyase activity and introduces double-stranded breaks at abasic sites: cleaves both single-stranded DNA and double-stranded DNA at abasic sites, with the greatest activity towards double-stranded DNA with two abasic sites. DNA lyase activity does not require alpha-ketoglutarate and iron and leads to the formation of an irreversible covalent protein-DNA adduct with the 5' DNA product. DNA lyase activity is not required during base excision repair and class switch recombination of the immunoglobulin heavy chain during B lymphocyte activation. May play a role in placental trophoblast lineage differentiation. The sequence is that of Nucleic acid dioxygenase ALKBH1 from Homo sapiens (Human).